Consider the following 964-residue polypeptide: MRVKILPLVFMTLLLIVPSQMLLPSGQANASTPGFIERVYTDKARYEPGELVTVTAQINNSGGTNWSGDVTMTIFHLENAVYSSVQHASIASGQTTDVTFSWTSDTTDFKGYFVSVDAGSLGQGYSSIDVSSDFAKYPRYGYISEFSSNETAAESAAKVNELAQDYKINAWQFYDWMWRHETMIKRTGGTIDPTWIDLFNRQISWPTINNQIAAIHNQNGAAMAYAMIYAARENYSGFGVNPEWGMYMDPAHTKQLDVDFGNNSTYMYLFDPANAGWQQFIHEQYLDAIQTANFDGIHIDQMGQRNNIYDYSGNSIDLATRFTPFIKAAKTKLTAANSNQDFMTFNIVDGTVNGWAANDVSKNANVDFLYSEIWHLSNSYMQLKDYIDSLRANSGNKAVVLAAYMNYGENIGDRYEAEDAALQHTAVNTDHAGYTGSGFVDQFADVNDSVTFTITAPEEGYYSLVFRFANHSGYTATRNLYVDSNFEIELPFQNQPNWDTWSHETWHQVYLTPGTHTIKLSYDSSNTGAINLDSLTLGTFDEHSIRLADAMMAASGATHIELGEDSQMLAHEYYPNRSKSMRSTLKSAMKDHYNFITAYENLLFDADVIDNDAGKQFINIAGVNTSPDGAANTVWHMSKRTPEYNILHLINLVNNDQNWRNSGNQPTAQTNLATKVYIGAEETITGVYAASPDHNQGATQSLPFTTGTDSSGSYISFTVPSLEYWSMIYMKRSTAAPVDNMYEAETAIKSNVSVNTNHAGYTGSGFVDQFATVNDGVSFIVHASSKDDYVLRFRYSNGGSDANRDVFLNGKYAGTVQLKHTGGWNQWAYGELTVPLAQGSHSVVLWYNSSNSGAVNLDHLKLDKTYIWQFDRQIASVPAGYRITFKAGLPGWVHFGTDNWKNVMDIPLASNGSSDSSLNYEASIGPFPSATTVDVTFLWDDNNNGILEDMIDRWEGTDFQIAIP.

Positions 1 to 30 (MRVKILPLVFMTLLLIVPSQMLLPSGQANA) are cleaved as a signal peptide. 2 consecutive CBM6 domains span residues 413 to 538 (DRYE…LTLG) and 740 to 863 (NMYE…LKLD).

It belongs to the glycosyl hydrolase 66 family.

The catalysed reaction is cyclizes part of a (1-&gt;6)-alpha-D-glucan chain by formation of a (1-&gt;6)-alpha-D-glucosidic bond.. In terms of biological role, produces cycloisomaltooligosaccharide from dextran. The polypeptide is Cycloisomaltooligosaccharide glucanotransferase (cit) (Niallia circulans (Bacillus circulans)).